We begin with the raw amino-acid sequence, 471 residues long: Tryptophanase (471 aa).

Lysine 270 carries the N6-(pyridoxal phosphate)lysine modification.

It belongs to the beta-eliminating lyase family. In terms of assembly, homotetramer. Pyridoxal 5'-phosphate is required as a cofactor.

The enzyme catalyses L-tryptophan + H2O = indole + pyruvate + NH4(+). It participates in amino-acid degradation; L-tryptophan degradation via pyruvate pathway; indole and pyruvate from L-tryptophan: step 1/1. The polypeptide is Tryptophanase (Histophilus somni (strain 129Pt) (Haemophilus somnus)).